We begin with the raw amino-acid sequence, 240 residues long: Phosphoenolpyruvate guanylyltransferase (240 aa).

Phosphoenolpyruvate is bound by residues Thr161, Gly178, and Ser181.

The protein belongs to the CofC family.

The catalysed reaction is phosphoenolpyruvate + GTP + H(+) = enolpyruvoyl-2-diphospho-5'-guanosine + diphosphate. The protein operates within cofactor biosynthesis; coenzyme F420 biosynthesis. Functionally, guanylyltransferase that catalyzes the activation of phosphoenolpyruvate (PEP) as enolpyruvoyl-2-diphospho-5'-guanosine, via the condensation of PEP with GTP. It is involved in the biosynthesis of coenzyme F420, a hydride carrier cofactor. This Rhodococcus opacus (strain B4) protein is Phosphoenolpyruvate guanylyltransferase.